The primary structure comprises 567 residues: Pyrethroid hydrolase Ces2e (567 aa).

Residues 1-36 (MAQTRAWKSIMPLESLPGWLNAVVWGLLLLFCQVQG) form the signal peptide. Gln-37 bears the Pyrrolidone carboxylic acid mark. Cys-105 and Cys-132 are joined by a disulfide. Residue Ser-237 is the Acyl-ester intermediate of the active site. Cys-289 and Cys-300 form a disulfide bridge. Active-site charge relay system residues include Glu-354 and His-465.

This sequence belongs to the type-B carboxylesterase/lipase family. As to expression, expressed in liver.

It is found in the microsome. The catalysed reaction is all-trans-retinyl hexadecanoate + H2O = all-trans-retinol + hexadecanoate + H(+). The enzyme catalyses (-)-trans-permethrin + H2O = (3-phenoxyphenyl)methanol + (1S,3R)-3-(2,2-dichlorovinyl)-2,2-dimethylcyclopropanecarboxylate + H(+). In terms of biological role, carboxylesterase that catalyzes the hydrolysis of pyrethroids pesticides. Hydrolyzes trans-permethrin at a rate about 22-fold higher than cis-permethrin. Also hydrolyzes trans-cypermethrin. Hydrolyzes retinyl esters. The sequence is that of Pyrethroid hydrolase Ces2e from Rattus norvegicus (Rat).